A 496-amino-acid chain; its full sequence is E3 ubiquitin-protein ligase CBL-C (496 aa).

The segment at 7–144 (PRGWQRGEPR…SALFPAGKYC (138 aa)) is 4H. A Cbl-PTB domain is found at 7–320 (PRGWQRGEPR…GKKHNPDLTE (314 aa)). The segment at 145–217 (GHLYQLTKGS…FEFDVFTRLF (73 aa)) is EF-hand-like. Asp198, Thr200, Asn202, and Glu209 together coordinate Ca(2+). Residues 218 to 320 (QPWPTLLRNW…GKKHNPDLTE (103 aa)) are SH2-like. Arg263 is a 4-O-phospho-L-tyrosine binding site. A linker region spans residues 321–349 (LCRVEPYQRIQVSEEQLLLYQAMNSTFQL). The residue at position 340 (Tyr340) is a Phosphotyrosine; by SRC. The RING-type zinc-finger motif lies at 350 to 389 (CKICAERDKDVRIEPCGHLLCSCCLAAWQDSDSQTCPFCR). The tract at residues 350-494 (CKICAERDKD…RPRAREEATE (145 aa)) is interaction with RET. A disordered region spans residues 432–453 (PVIPSAPSLLPEDQFPQGPQDK).

In terms of assembly, interacts with Ubiquitin-conjugating enzyme E2 UBE2D2 and UBE2D3. Isoform 1 interacts with EGFR (tyrosine phosphorylated). Interacts with the SH3 domain proteins LYN and CRK. Interacts (via RING-type zinc finger) with TGFB1I1 (via LIM zinc-binding domain 2); the interaction is direct and enhances the E3 activity. Interacts directly with RET (inactive) and CD2AP; dissociates from RET upon RET activation by GDNF which also increases the interaction with CD2AP suggesting dissociation as CBLC:CD2AP complex. Interacts with SRC; the interaction is enhanced when SRC is phosphorylated at 'Tyr-419'. Phosphorylated on tyrosines by EGFR. Post-translationally, phosphorylated on multiple tyrosine residues by SRC. Isoform 1, but not isoform 2, is phosphorylated on tyrosines by EGFR. In terms of processing, autoubiquitinated, when phosphorylated at Tyr-340. Widely expressed in tissues, where the expression is restricted to epithelial cells (at protein level).

It carries out the reaction S-ubiquitinyl-[E2 ubiquitin-conjugating enzyme]-L-cysteine + [acceptor protein]-L-lysine = [E2 ubiquitin-conjugating enzyme]-L-cysteine + N(6)-ubiquitinyl-[acceptor protein]-L-lysine.. With respect to regulation, phosphorylation at Tyr-340 is necessary and sufficient for the activation of E3 activity. In terms of biological role, acts as an E3 ubiquitin-protein ligase, which accepts ubiquitin from specific E2 ubiquitin-conjugating enzymes, and then transfers it to substrates promoting their degradation by the proteasome. Functionally coupled with the E2 ubiquitin-protein ligases UB2D1, UB2D2 and UB2D3. Regulator of EGFR mediated signal transduction; upon EGF activation, ubiquitinates EGFR. Isoform 1, but not isoform 2, inhibits EGF stimulated MAPK1 activation. Promotes ubiquitination of SRC phosphorylated at 'Tyr-424', has the highest ubiquitin ligase activity among CBL family proteins. In collaboration with CD2AP may act as regulatory checkpoint for Ret signaling by modulating the rate of RET degradation after ligand activation; CD2AP converts it from an inhibitor to a promoter of RET degradation; the function limits the potency of GDNF on neuronal survival. In Mus musculus (Mouse), this protein is E3 ubiquitin-protein ligase CBL-C (Cblc).